Consider the following 21-residue polypeptide: Cupiennin-6b (21 aa).

Residue Ser21 is modified to Serine amide.

As to expression, expressed by the venom gland.

It is found in the secreted. This is Cupiennin-6b from Cupiennius salei (American wandering spider).